The sequence spans 595 residues: P2X purinoceptor 7 (595 aa).

The Cytoplasmic segment spans residues 1–22 (MPACCSCSDVFQYETNKVTRIQ). The S-palmitoyl cysteine moiety is linked to residue C4. The chain crosses the membrane as a helical span at residues 23-46 (SMNYGTIKWFFHVIIFSYVCFALV). The Extracellular portion of the chain corresponds to 47–328 (SDKLYQRKEP…ILVFGTGGKF (282 aa)). 3 cysteine pairs are disulfide-bonded: C119–C168, C129–C152, and C135–C162. ADP-ribosylarginine occurs at positions 125 and 133. N-linked (GlcNAc...) asparagine glycosylation is present at N187. Residue T189 participates in ATP binding. 2 N-linked (GlcNAc...) asparagine glycosylation sites follow: N202 and N213. An intrachain disulfide couples C216 to C226. N241 carries N-linked (GlcNAc...) asparagine glycosylation. Residues C260 and C269 are joined by a disulfide bond. N-linked (GlcNAc...) asparagine glycosylation is present at N284. ATP is bound by residues R294 and K311. A helical transmembrane segment spans residues 329–353 (DIIQLVVYIGSTLSYFGLAAVFIDF). Residue S342 coordinates Na(+). At Y343 the chain carries Phosphotyrosine. Over 354–595 (LIDTYSSNCC…GQYSGFKSPY (242 aa)) the chain is Cytoplasmic. A C-cys anchor region spans residues 360–377 (SNCCRSHIYPWCKCCQPC). 4 S-palmitoyl cysteine lipidation sites follow: C362, C363, C374, and C377. Residue S390 is modified to Phosphoserine. Positions 395–595 (KPTLKYVSFV…GQYSGFKSPY (201 aa)) are cytoplasmic ballast. C479, C499, and C506 together coordinate Zn(2+). GTP-binding residues include R546, H547, Y550, and A567. Position 572 (C572) interacts with Zn(2+). Residues K583, S589, and G590 each contribute to the GTP site.

Belongs to the P2X receptor family. Homotrimers. Interacts with LAMA3, ITGB2, ACTB, ACTN4, SVIL, MPP3, HSPA1, HSPCB, HSPA8, PIK230 and PTPRB. Interacts (via C-terminus) with EMP2. Interacts with isoform B; this interaction potentiates P2RX7 responses. In terms of processing, phosphorylation results in its inactivation. Post-translationally, ADP-ribosylation at Arg-125 is necessary and sufficient to activate P2RX7 and gate the channel. Palmitoylation of several cysteines in the C-terminal cytoplasmic tail is required for efficient localization to cell surface. Palmitoylation prevents channel desensitization by physically anchoring the palmitoylated groups to the membrane. In terms of tissue distribution, widely expressed with highest levels in brain and immune tissues. Predominant form in many tissues.

It localises to the cell membrane. It catalyses the reaction Ca(2+)(in) = Ca(2+)(out). The enzyme catalyses K(+)(in) = K(+)(out). The catalysed reaction is Na(+)(in) = Na(+)(out). Its activity is regulated as follows. Activated by high extracellular ATP levels (0.1-2.5 mM). The synthetic analog 2'(3')-O-(4-benzoylbenzoyl)ATP (BzATP) acts as a potent agonist. Does not undergo desensitization, instead, undergoes a facilitation process where currents progressively increase with repetitive or prolonged agonist application. Palmitoylation prevents channel desensitization. The permeability of the P2RX7 channel is modulated by the amount of cholesterol in the plasma membrane. Functionally, ATP-gated nonselective transmembrane cation channel that requires high millimolar concentrations of ATP for activation. Upon ATP binding, it rapidly opens to allow the influx of small cations Na(+) and Ca(2+), and the K(+) efflux. Also has the ability to form a large pore in the cell membrane, allowing the passage of large cationic molecules. In microglia, may mediate NADPH transport across the plasma membrane. In immune cells, P2RX7 acts as a molecular sensor in pathological inflammatory states by detecting and responding to high local concentrations of extracellar ATP. In microglial cells, P2RX7 activation leads to the release of pro-inflammatory cytokines, such as IL-1beta and IL-18, through the activation of the NLRP3 inflammasome and caspase-1. Cooperates with KCNK6 to activate NLRP3 inflammasome. Activates death pathways leading to apoptosis and autophagy. Activates death pathways leading to pyroptosis. In terms of biological role, shows ion channel activity but no macropore function. Non-functional channel. The sequence is that of P2X purinoceptor 7 (P2RX7) from Homo sapiens (Human).